The following is a 601-amino-acid chain: MKEFQRMLMLQYSKHGECILKEIGAAFRGEHPADLTIVCENKVKLHAHKLVLAAASPLIRNLLEDTHLSDCSTTVYFPDVNATYFKFLLDFLYSGQTCITSRDVNYLHDLLLLLQIKSDSWKTTDSAYLSSKCGGLRDRADRRKQQYTSPQNLEPDQTLKYEVDSVDESRNAADFSSAFNSNDNCESAAECERSGGHNNKEEDEDDCTHKDNKSDKDTDEIVNLSNAPPSGTSGSNSNISTSSNHQQQQHHHHHHHNHNNNNNNNNNNSSSSTINPVNLSLDLRTKSENSASRTLGSGSDHSGIDLAVTASESTKRKGLFFDSHKDVMKPLSDGSDINSSPENYVVTPHRKRRPGFHNTQSDNQPFTSYPHSLLEELRLAKSTTSPISGFGSEKNMLAHLEDGALNGDTLTPDRKHLLEAQRNRAQSPEIPMHLGPQFVYQWQSNQNAAMSAMPNLQSRLSSLSHISLNLDHPEGRSGSASGSGANLAGSNTHASSVREYRCEYCGKQFGMSWNLKTHLRVHTGEKPFACRLCVAMFKQKAHLLKHLCSVHRNVITTTNGADTENRYSCCFCSMCFESVQELVRHLSGHHNNLLLTKNLRE.

The BTB domain maps to 33–101 (ADLTIVCENK…LYSGQTCITS (69 aa)). Disordered stretches follow at residues 188–276 (AAEC…TINP), 331–365 (LSDG…DNQP), and 471–491 (DHPE…AGSN). Basic and acidic residues-rich tracts occupy residues 190 to 200 (ECERSGGHNNK) and 207 to 216 (CTHKDNKSDK). Residues 223–234 (NLSNAPPSGTSG) show a composition bias toward polar residues. Low complexity predominate over residues 235–247 (SNSNISTSSNHQQ). Residues 248–258 (QQHHHHHHHNH) are compositionally biased toward basic residues. Positions 259 to 275 (NNNNNNNNNNSSSSTIN) are enriched in low complexity. The segment covering 476–490 (RSGSASGSGANLAGS) has biased composition (low complexity). 3 C2H2-type zinc fingers span residues 500-522 (YRCE…LRVH), 528-551 (FACR…CSVH), and 567-590 (YSCC…SGHH).

Expressed from stage 5 in two rather faint stripes at positions of 64% (anterior domain; AD) and 17% (posterior domain; PD) egg length. During early gastrulation, at stage 6, these two stripes become more evident and detectable at the region posterior to the cephalic furrow and in the hindgut primordium. The AD disappears as gastrulation proceeds, while the PD remains. At stage 15, the AD appears again in the foregut, and PD expression in the hindgut and anal pad. In imaginal disks, it is ubiquitously expressed in both males and females in genital and eye-antennal disks. Not expressed in the brain. In genital disks, it is expressed along the margin of the anterior bulbus in males, while in females it is expressed in the posterior compartment along the anterior-posterior border, with medial expansion in the most posterior region.

Its subcellular location is the nucleus. Functionally, transcription factor required for terminalia development. Negative regulator of the JAK/STAT pathway: represses JAK/STAT-dependent expression of ventral veins lacking (vvl) in the posterior spiracles. This Drosophila melanogaster (Fruit fly) protein is Transcription factor Ken (ken).